A 57-amino-acid chain; its full sequence is DNA-directed RNA polymerase subunit Rpo6 (57 aa).

The protein belongs to the archaeal Rpo6/eukaryotic RPB6 RNA polymerase subunit family. As to quaternary structure, part of the RNA polymerase complex.

It is found in the cytoplasm. It carries out the reaction RNA(n) + a ribonucleoside 5'-triphosphate = RNA(n+1) + diphosphate. In terms of biological role, DNA-dependent RNA polymerase (RNAP) catalyzes the transcription of DNA into RNA using the four ribonucleoside triphosphates as substrates. The sequence is that of DNA-directed RNA polymerase subunit Rpo6 from Methanocaldococcus jannaschii (strain ATCC 43067 / DSM 2661 / JAL-1 / JCM 10045 / NBRC 100440) (Methanococcus jannaschii).